The following is a 550-amino-acid chain: 2-succinyl-5-enolpyruvyl-6-hydroxy-3-cyclohexene-1-carboxylate synthase (550 aa).

It belongs to the TPP enzyme family. MenD subfamily. In terms of assembly, homodimer. Mg(2+) is required as a cofactor. Mn(2+) serves as cofactor. Requires thiamine diphosphate as cofactor.

It carries out the reaction isochorismate + 2-oxoglutarate + H(+) = 5-enolpyruvoyl-6-hydroxy-2-succinyl-cyclohex-3-ene-1-carboxylate + CO2. Its pathway is quinol/quinone metabolism; 1,4-dihydroxy-2-naphthoate biosynthesis; 1,4-dihydroxy-2-naphthoate from chorismate: step 2/7. The protein operates within quinol/quinone metabolism; menaquinone biosynthesis. Its function is as follows. Catalyzes the thiamine diphosphate-dependent decarboxylation of 2-oxoglutarate and the subsequent addition of the resulting succinic semialdehyde-thiamine pyrophosphate anion to isochorismate to yield 2-succinyl-5-enolpyruvyl-6-hydroxy-3-cyclohexene-1-carboxylate (SEPHCHC). This Desulfitobacterium hafniense (strain DSM 10664 / DCB-2) protein is 2-succinyl-5-enolpyruvyl-6-hydroxy-3-cyclohexene-1-carboxylate synthase.